Here is a 566-residue protein sequence, read N- to C-terminus: Osteoclast stimulatory transmembrane protein (566 aa).

Over 1–51 the chain is Cytoplasmic; sequence MPGHPGAAEQLVKTGWRSWHLGFWKALAPLQAAWDAFSQPVPASCGQLLTQ. Residues 52–72 traverse the membrane as a helical segment; it reads LLLCASLAAAAAGLVYHWLAS. The Extracellular portion of the chain corresponds to 73-81; the sequence is LLLYPPGPS. A helical transmembrane segment spans residues 82-102; that stretch reads AMVATVCGLLVFLSLGLVPPV. At 103–128 the chain is on the cytoplasmic side; the sequence is RCLFALSVPTLGMEQGRRLLLSYSTA. Residues 129–149 traverse the membrane as a helical segment; the sequence is TLAIAVVPNVLANVGAAGQVL. Over 150-227 the chain is Extracellular; sequence RCVTEGSLES…ARAAALGTQR (78 aa). A helical transmembrane segment spans residues 228 to 248; sequence VVTGLFMLGLLVESAWYLHCY. Residues 249–304 are Cytoplasmic-facing; that stretch reads LTDLRFDNIYATQQLTQRLAQAQATHLLAPPPTWLLQAAQLRLSQEELLSCLLRLG. The chain crosses the membrane as a helical span at residues 305–325; it reads LLALLLVATAVAVATDHVAFL. Topologically, residues 326-398 are extracellular; it reads LAQATVDWAQ…CPLLPARRPR (73 aa). A helical transmembrane segment spans residues 399–419; it reads AAAPLAAGALQLLAGSTVLLE. At 420-566 the chain is on the cytoplasmic side; it reads AYARRLRHAI…EGNTGHDRPG (147 aa).

The protein resides in the membrane. Its function is as follows. Probable cell surface receptor that plays a role in cellular fusion and cell differentiation. Cooperates with DCSTAMP in modulating cell-cell fusion in both osteoclasts and foreign body giant cells (FBGCs). Involved in osteoclast bone resorption. Promotes osteoclast differentiation and may play a role in the multinucleated osteoclast maturation. The polypeptide is Osteoclast stimulatory transmembrane protein (OCSTAMP) (Homo sapiens (Human)).